The primary structure comprises 543 residues: Keratin, type II cytoskeletal 75 (543 aa).

A compositionally biased stretch (polar residues) spans Met-1–Gly-16. The segment at Met-1–Gly-48 is disordered. The interval Met-1 to Glu-144 is head. A compositionally biased stretch (low complexity) spans Phe-17 to Ser-36. The segment at Glu-145–Leu-180 is coil 1A. One can recognise an IF rod domain in the interval Glu-145–Leu-458. The linker 1 stretch occupies residues Gln-181–Tyr-199. The interval Ile-200 to Gln-292 is coil 1B. The tract at residues Thr-293–Ile-315 is linker 12. Residues Ile-316–Glu-454 are coil 2. The tract at residues Glu-455 to His-543 is tail. Positions Ser-511–His-543 are disordered. Residues Ser-526 to His-543 show a composition bias toward low complexity.

Belongs to the intermediate filament family. As to quaternary structure, heterodimer of a type I and a type II keratin. May associate with KRT17.

In terms of biological role, plays a central role in hair and nail formation. Essential component of keratin intermediate filaments in the companion layer of the hair follicle. This is Keratin, type II cytoskeletal 75 (KRT75) from Bos taurus (Bovine).